The following is a 247-amino-acid chain: MASLLNARTAVITGGAQGLGLAIGQRFVAEGARVVLGDVNLEATEVAAKRLGGDDVALAVRCDVTQADDVDILIRTAVERFGGLDVMVNNAGITRDATMRTMTEEQFDQVIAVHLKGTWNGTRLAAAIMRERKRGAIVNMSSVSGKVGMVGQTNYSAAKAGIVGMTKAAAKELAHLGIRVNAIAPGLIRSAMTEAMPQRIWDQKLAEVPMGRAGEPSEVASVAVFLASDLSSYMTGTVLDVTGGRFI.

Positions 19, 38, 63, and 64 each coordinate NAD(+). Residue serine 142 participates in substrate binding. NAD(+)-binding residues include tyrosine 155, lysine 159, and serine 190. The active-site Proton acceptor is tyrosine 155.

It belongs to the short-chain dehydrogenases/reductases (SDR) family.

This is an uncharacterized protein from Mycobacterium bovis (strain ATCC BAA-935 / AF2122/97).